Reading from the N-terminus, the 887-residue chain is DNA mismatch repair protein MutS (887 aa).

621–628 (GPNMGGKS) serves as a coordination point for ATP. The disordered stretch occupies residues 828–853 (AEPEPNKPAAAAKTKPASPQPDLFAS). A compositionally biased stretch (low complexity) spans 834–848 (KPAAAAKTKPASPQP).

The protein belongs to the DNA mismatch repair MutS family.

In terms of biological role, this protein is involved in the repair of mismatches in DNA. It is possible that it carries out the mismatch recognition step. This protein has a weak ATPase activity. The chain is DNA mismatch repair protein MutS from Saccharophagus degradans (strain 2-40 / ATCC 43961 / DSM 17024).